A 749-amino-acid polypeptide reads, in one-letter code: Phosphate-regulating neutral endopeptidase PHEX (749 aa).

The Cytoplasmic segment spans residues 1 to 20; the sequence is MEAETGSTMETGKGTNRGIR. The chain crosses the membrane as a helical; Signal-anchor for type II membrane protein span at residues 21-37; that stretch reads IALALFIGGTLVLGTLL. The Extracellular segment spans residues 38-749; the sequence is FLVSQGLLSF…NRGADSCRLW (712 aa). In terms of domain architecture, Peptidase M13 spans 53-749; it reads YCLKPECIEA…NRGADSCRLW (697 aa). A disulfide bond links cysteine 54 and cysteine 59. Residues asparagine 71, asparagine 238, asparagine 263, asparagine 290, asparagine 301, asparagine 377, and asparagine 484 are each glycosylated (N-linked (GlcNAc...) asparagine). Intrachain disulfides connect cysteine 77–cysteine 733, cysteine 85–cysteine 693, cysteine 142–cysteine 406, and cysteine 617–cysteine 746. Histidine 580 serves as a coordination point for Zn(2+). Residue glutamate 581 is part of the active site. Positions 584 and 642 each coordinate Zn(2+). Residue aspartate 646 is the Proton donor of the active site. Asparagine 736 is a glycosylation site (N-linked (GlcNAc...) asparagine).

It belongs to the peptidase M13 family. Interacts with MEPE; the interaction is zinc-dependent (via ASARM motif). The cofactor is Zn(2+). In terms of processing, N-glycosylated. As to expression, expressed in bone, specifically in the osteoid and in osteocytes. Expressed in teeth, specifically in odontoblasts and ameloblasts. Expressed moderately by macrophages in the liver and has minimal expression in brown adipose tissue. Also expressed in suprabasal layers of the skin.

It localises to the cell membrane. Its function is as follows. Peptidase that cleaves SIBLING (small integrin-binding ligand, N-linked glycoprotein)-derived ASARM peptides, thus regulating their biological activity. Cleaves ASARM peptides between Ser and Glu or Asp residues. Regulates osteogenic cell differentiation and bone mineralization through the cleavage of the MEPE-derived ASARM peptide. Promotes dentin mineralization and renal phosphate reabsorption by cleaving DMP1- and MEPE-derived ASARM peptides. Inhibits the cleavage of MEPE by CTSB/cathepsin B thus preventing MEPE degradation. In Mus musculus (Mouse), this protein is Phosphate-regulating neutral endopeptidase PHEX (Phex).